A 104-amino-acid chain; its full sequence is Integration host factor subunit alpha (104 aa).

Belongs to the bacterial histone-like protein family. In terms of assembly, heterodimer of an alpha and a beta chain.

In terms of biological role, this protein is one of the two subunits of integration host factor, a specific DNA-binding protein that functions in genetic recombination as well as in transcriptional and translational control. The polypeptide is Integration host factor subunit alpha (Buchnera aphidicola subsp. Cinara cedri (strain Cc)).